Reading from the N-terminus, the 415-residue chain is G-protein coupled receptor daf-38 (415 aa).

Over residues 1 to 19 the composition is skewed to low complexity; that stretch reads MLLPSNLTTSTLMTSSSES. Residues 1–25 are disordered; the sequence is MLLPSNLTTSTLMTSSSESYDADNP. Over 1-35 the chain is Extracellular; the sequence is MLLPSNLTTSTLMTSSSESYDADNPGLPPEPILSD. Residues 36 to 56 traverse the membrane as a helical segment; sequence YVEMFTLVLNFIVGAPLNLAA. The Cytoplasmic portion of the chain corresponds to 57-75; that stretch reads YTQLSERPTSTRLDLLKRS. The chain crosses the membrane as a helical span at residues 76-96; sequence LNYSDLLVLFIYVPSRACWLL. Residues 97–108 are Extracellular-facing; it reads TYDWRGGDALCK. Cysteines 107 and 187 form a disulfide. Residues 109 to 129 form a helical membrane-spanning segment; the sequence is IVKMFHTFAFQSSSNVIVCIA. Residues 130–152 are Cytoplasmic-facing; the sequence is VDRLLSVLSPSHHSPNKALKRTK. The chain crosses the membrane as a helical span at residues 153–173; that stretch reads MMLIVAWIVALVISCPQLFIW. Residues 174–222 lie on the Extracellular side of the membrane; the sequence is KAYLALPEYNWSQCLQIWEIARMEKFNKPQVVPEFDAEFWYSILHISLV. The chain crosses the membrane as a helical span at residues 223–243; that stretch reads FWIPCIIIMLSYIIVISWVWI. The Cytoplasmic segment spans residues 244–345; that stretch reads NSRPSIRHTS…NLNRSRALRV (102 aa). Residues 346 to 366 traverse the membrane as a helical segment; sequence SLLLVVAYIICWLPYNLISLI. Over 367 to 382 the chain is Extracellular; it reads QFLDRDFFSSYLKHVH. The chain crosses the membrane as a helical span at residues 383–403; that stretch reads FCQQLIIFNSVVNPWLYGFFG. Over 404 to 415 the chain is Cytoplasmic; it reads PRRPSTTGAGRH.

It belongs to the G-protein coupled receptor 1 family. In terms of assembly, heterodimer; with daf-37. In terms of tissue distribution, expressed in the ASI and ASK chemosensory neurons and in the IL-2 interneurons, but weakly expressed in other head neurons in hermaphrodites.

The protein resides in the cell membrane. Functionally, G-protein coupled receptor (GPCR) that forms a heterodimer with daf-37 to control dauer formation and behavior. Required for the response to dauer inducing pheromones such as the ascarosides ascr#2, ascr#3 and ascr#5. This Caenorhabditis elegans protein is G-protein coupled receptor daf-38.